The following is a 193-amino-acid chain: Capsid protein (193 aa).

It localises to the virion. This is Capsid protein from Apple chlorotic leaf spot virus (isolate apple) (ACLSV).